The chain runs to 79 residues: Sulfur carrier protein TusA (79 aa).

Cysteine 17 (cysteine persulfide intermediate) is an active-site residue.

This sequence belongs to the sulfur carrier protein TusA family.

The protein resides in the cytoplasm. Functionally, sulfur carrier protein which probably makes part of a sulfur-relay system. The protein is Sulfur carrier protein TusA of Pseudoalteromonas translucida (strain TAC 125).